Here is a 378-residue protein sequence, read N- to C-terminus: MSELNDLLTTRELQRWRLILGEAAETTLCGLDDNARQIDHALEWLYGRDPERLQRGERSGGLGGSNLTTPEWINSIHTLFPQQVIERLESDAVLRYGIEDVVTNLDVLERMQPSESLLRAVLHTKHLMNPEVLAAARRIVCQVVEEIMARLAKEVRQAFSGVRDRRRRSFIPLARNFDFKSTLRANLQHWHPQHGKLYIESPRFNSRIKRQSEQWQLVLLVDQSGSMVDSVIHSAVMAACLWQLPGIRTHLVAFDTSVVDLTADVADPVELLMKVQLGGGTNIASAVEYGRQLIEQPAKSVIILVSDFYEGGSSSLLTHQVKKCVQSGIKVLGLAALDSTATPCYDRDTAQALVNVGAQIAAMTPGELASWLAENLQS.

This is an uncharacterized protein from Escherichia coli (strain K12).